The primary structure comprises 493 residues: 3-octaprenyl-4-hydroxybenzoate carboxy-lyase (493 aa).

Asn-172 lines the Mn(2+) pocket. Residues 175–177 (IYR), 189–191 (RWL), and 194–195 (RG) contribute to the prenylated FMN site. Residue Glu-238 coordinates Mn(2+). The active-site Proton donor is Asp-287.

It belongs to the UbiD family. As to quaternary structure, homohexamer. Prenylated FMN is required as a cofactor. Mn(2+) serves as cofactor.

It is found in the cell membrane. It catalyses the reaction a 4-hydroxy-3-(all-trans-polyprenyl)benzoate + H(+) = a 2-(all-trans-polyprenyl)phenol + CO2. The protein operates within cofactor biosynthesis; ubiquinone biosynthesis. Catalyzes the decarboxylation of 3-octaprenyl-4-hydroxy benzoate to 2-octaprenylphenol, an intermediate step in ubiquinone biosynthesis. The protein is 3-octaprenyl-4-hydroxybenzoate carboxy-lyase of Shewanella baltica (strain OS155 / ATCC BAA-1091).